A 360-amino-acid polypeptide reads, in one-letter code: Uroporphyrinogen decarboxylase (360 aa).

Residues 31–35 (RQAGR), aspartate 81, tyrosine 157, threonine 212, and histidine 333 contribute to the substrate site.

Belongs to the uroporphyrinogen decarboxylase family. As to quaternary structure, homodimer.

Its subcellular location is the cytoplasm. It carries out the reaction uroporphyrinogen III + 4 H(+) = coproporphyrinogen III + 4 CO2. It functions in the pathway porphyrin-containing compound metabolism; protoporphyrin-IX biosynthesis; coproporphyrinogen-III from 5-aminolevulinate: step 4/4. Its function is as follows. Catalyzes the decarboxylation of four acetate groups of uroporphyrinogen-III to yield coproporphyrinogen-III. The sequence is that of Uroporphyrinogen decarboxylase from Janthinobacterium sp. (strain Marseille) (Minibacterium massiliensis).